Here is a 129-residue protein sequence, read N- to C-terminus: Small ribosomal subunit protein uS12 (129 aa).

Positions 1-25 (MPTYNQLVRFGRKSKTRKTKSPALE) are disordered. Positions 10 to 20 (FGRKSKTRKTK) are enriched in basic residues. Aspartate 89 is subject to 3-methylthioaspartic acid. Residues 109–129 (GRKQGRSRYGTPRKQVAVTKK) form a disordered region.

Belongs to the universal ribosomal protein uS12 family. Part of the 30S ribosomal subunit. Contacts proteins S8 and S17. May interact with IF1 in the 30S initiation complex.

Its function is as follows. With S4 and S5 plays an important role in translational accuracy. Functionally, interacts with and stabilizes bases of the 16S rRNA that are involved in tRNA selection in the A site and with the mRNA backbone. Located at the interface of the 30S and 50S subunits, it traverses the body of the 30S subunit contacting proteins on the other side and probably holding the rRNA structure together. The combined cluster of proteins S8, S12 and S17 appears to hold together the shoulder and platform of the 30S subunit. The chain is Small ribosomal subunit protein uS12 from Rickettsia peacockii (strain Rustic).